Here is a 200-residue protein sequence, read N- to C-terminus: Recombination protein RecR (200 aa).

The C4-type zinc-finger motif lies at 57–72 (CEHCRTFTEEDICSIC). The Toprim domain occupies 81–176 (RLLCVVEMPA…KVSRIAHGIP (96 aa)).

The protein belongs to the RecR family.

Its function is as follows. May play a role in DNA repair. It seems to be involved in an RecBC-independent recombinational process of DNA repair. It may act with RecF and RecO. The chain is Recombination protein RecR from Mannheimia succiniciproducens (strain KCTC 0769BP / MBEL55E).